The sequence spans 244 residues: Putative esophageal gland cell secretory protein 6 (244 aa).

An N-terminal signal peptide occupies residues 1 to 22 (MDRRFTVFLVIALVTSIYEVLS). A disulfide bridge connects residues Cys88 and Cys91.

This sequence belongs to the SelWTH family. SELT subfamily.

The chain is Putative esophageal gland cell secretory protein 6 (HSP6) from Heterodera glycines (Soybean cyst nematode worm).